Here is a 363-residue protein sequence, read N- to C-terminus: Regulator of G-protein signaling rgs-3 (363 aa).

The interval 1–70 (MWRSYKAETP…NSSATSPTPS (70 aa)) is disordered. The span at 21-35 (LNLHDSSESDHEGRQ) shows a compositional bias: basic and acidic residues. Composition is skewed to low complexity over residues 36 to 50 (SRSA…APAS) and 58 to 70 (PITN…PTPS). 2 RGS domains span residues 112-225 (NCAN…LEYL) and 240-359 (SFEG…IDLL).

In terms of processing, may be phosphorylated and activated by egl-4.

Its function is as follows. Modulates chemotaxis responses by regulating positively the sensitivity to CO2 levels in BAG neurons and by regulating negatively the sensitivity to quinine in ASH sensory neurons. The protein is Regulator of G-protein signaling rgs-3 (rgs-3) of Caenorhabditis elegans.